Consider the following 647-residue polypeptide: tRNA 5-methylaminomethyl-2-thiouridine biosynthesis bifunctional protein MnmC (647 aa).

The interval 1–235 (MSIPPFSQAS…KRDMLCGRFT (235 aa)) is tRNA (mnm(5)s(2)U34)-methyltransferase. Residues 250–647 (IGGGIAGTAS…RGLACHPLRR (398 aa)) are FAD-dependent cmnm(5)s(2)U34 oxidoreductase.

The protein in the N-terminal section; belongs to the methyltransferase superfamily. tRNA (mnm(5)s(2)U34)-methyltransferase family. This sequence in the C-terminal section; belongs to the DAO family. Requires FAD as cofactor.

Its subcellular location is the cytoplasm. It carries out the reaction 5-aminomethyl-2-thiouridine(34) in tRNA + S-adenosyl-L-methionine = 5-methylaminomethyl-2-thiouridine(34) in tRNA + S-adenosyl-L-homocysteine + H(+). Its function is as follows. Catalyzes the last two steps in the biosynthesis of 5-methylaminomethyl-2-thiouridine (mnm(5)s(2)U) at the wobble position (U34) in tRNA. Catalyzes the FAD-dependent demodification of cmnm(5)s(2)U34 to nm(5)s(2)U34, followed by the transfer of a methyl group from S-adenosyl-L-methionine to nm(5)s(2)U34, to form mnm(5)s(2)U34. The protein is tRNA 5-methylaminomethyl-2-thiouridine biosynthesis bifunctional protein MnmC of Methylobacillus flagellatus (strain ATCC 51484 / DSM 6875 / VKM B-1610 / KT).